We begin with the raw amino-acid sequence, 276 residues long: MNAMTLATLPVRLEALVFDWAGTLVDFGSFAPTKVFVDAFARFGVQISLEQARGPMGMGKWDHIRALCNDAAIARQYQEQFGRLPTDEDVTAIYERFLPMQLEKVAEYSQPIPGAIELLHGLRQRGLKLGSCSGYPAAVMQRVLERAEREGLALDYVVASDDVPRSRPAPAMALRNVVELGIADVAGCVKVDDTAPGVEEGRRAGMWTVGLLLSGNAAGLSLEQFLSLDEAGREAARDRARAELQAGAPHYLIDTVADLPPVLADIETRLAAGQRP.

Residue Asp-19 is the Nucleophile of the active site. Mg(2+) contacts are provided by Asp-19 and Ala-21. Lys-60 acts as the Schiff-base intermediate with substrate in catalysis. Residue Asp-193 coordinates Mg(2+).

It belongs to the HAD-like hydrolase superfamily. PhnX family. As to quaternary structure, homodimer. Requires Mg(2+) as cofactor.

It catalyses the reaction phosphonoacetaldehyde + H2O = acetaldehyde + phosphate + H(+). Its function is as follows. Involved in phosphonate degradation. The polypeptide is Phosphonoacetaldehyde hydrolase (Bordetella bronchiseptica (strain ATCC BAA-588 / NCTC 13252 / RB50) (Alcaligenes bronchisepticus)).